Here is an 85-residue protein sequence, read N- to C-terminus: Dr hemagglutinin AFA-III operon regulatory protein AfaF (85 aa).

It to E.coli PapI and DaaF.

Functionally, may have a possible regulatory function on the expression of the other AFA-III genes. This chain is Dr hemagglutinin AFA-III operon regulatory protein AfaF (afaF), found in Escherichia coli.